Here is a 212-residue protein sequence, read N- to C-terminus: MVSRMVSTMLSGLLFWLASGWTPAFAYSPRTPDRVSEADIQRLLHGVMEQLGIARPRVEYPAHQAMNLVGPQSIEGGAHEGLQHLGPFGNIPNIVAELTGDNIPKDFSEDQGYPDPPNPCPVGKTADDGCLENTPDTAEFSREFQLHQHLFDPEHDYPGLGKWNKKLLYEKMKGGERRKRRSVNPYLQGQRLDNVVAKKSVPHFSDEDKDPE.

The first 26 residues, 1 to 26 (MVSRMVSTMLSGLLFWLASGWTPAFA), serve as a signal peptide directing secretion. A disulfide bridge links Cys-120 with Cys-130. 2 positions are modified to phosphoserine: Ser-141 and Ser-205. The segment at 174-212 (GGERRKRRSVNPYLQGQRLDNVVAKKSVPHFSDEDKDPE) is disordered.

It belongs to the 7B2 family. As to quaternary structure, interacts with PCSK2/PC2 early in the secretory pathway. Dissociation occurs at later stages. Post-translationally, proteolytically cleaved in the Golgi by a furin-like convertase to generate bioactive peptides. Sulfated on tyrosine residues.

It is found in the secreted. In terms of biological role, acts as a molecular chaperone for PCSK2/PC2, preventing its premature activation in the regulated secretory pathway. Binds to inactive PCSK2 in the endoplasmic reticulum and facilitates its transport from there to later compartments of the secretory pathway where it is proteolytically matured and activated. Also required for cleavage of PCSK2 but does not appear to be involved in its folding. Plays a role in regulating pituitary hormone secretion. The C-terminal peptide inhibits PCSK2 in vitro. This chain is Neuroendocrine protein 7B2 (SCG5), found in Homo sapiens (Human).